Consider the following 478-residue polypeptide: Ninja-family protein 8 (478 aa).

Disordered stretches follow at residues 1 to 247 (MDDD…LTPG), 337 to 374 (FTAKDKADQTGTKQVDDGKKPQEAGASSSAHAEDEKKA), and 454 to 478 (DAPAQDNSATLPAFPAGNQATSAEN). Positions 23-35 (KARDAPLEPKAEP) are enriched in basic and acidic residues. Polar residues predominate over residues 169–179 (ISISTDDGSTG). A compositionally biased stretch (acidic residues) spans 180–189 (ENEDVAESEA). A compositionally biased stretch (low complexity) spans 233–242 (SFSGSESSSG). Over residues 339–358 (AKDKADQTGTKQVDDGKKPQ) the composition is skewed to basic and acidic residues.

The protein belongs to the Ninja family.

It is found in the nucleus. The protein is Ninja-family protein 8 of Zea mays (Maize).